The following is an 84-amino-acid chain: Large ribosomal subunit protein bL27 (84 aa).

The tract at residues 1-20 is disordered; sequence MAHKKAGGSTRNGRDSHSKR.

The protein belongs to the bacterial ribosomal protein bL27 family.

The protein is Large ribosomal subunit protein bL27 of Blochmanniella pennsylvanica (strain BPEN).